The following is a 560-amino-acid chain: Eukaryotic translation initiation factor 3 subunit D-1 (560 aa).

A disordered region spans residues 98 to 166 (VQKPPHQRGR…RGPPPKMRES (69 aa)). Positions 100-121 (KPPHQRGRFRNMRNSRSGRGRN) are enriched in basic residues. Thr-128 is subject to Phosphothreonine. Positions 147–156 (GRGMGKKFGH) are enriched in basic residues. The RNA gate stretch occupies residues 291–305 (EFDLLTVNESSVEPP).

Belongs to the eIF-3 subunit D family. As to quaternary structure, component of the eukaryotic translation initiation factor 3 (eIF-3) complex. The eIF-3 complex interacts with pix.

It is found in the cytoplasm. MRNA cap-binding component of the eukaryotic translation initiation factor 3 (eIF-3) complex, which is involved in protein synthesis of a specialized repertoire of mRNAs and, together with other initiation factors, stimulates binding of mRNA and methionyl-tRNAi to the 40S ribosome. The eIF-3 complex specifically targets and initiates translation of a subset of mRNAs involved in cell proliferation. In the eIF-3 complex, eif3d specifically recognizes and binds the 7-methylguanosine cap of a subset of mRNAs. This Drosophila simulans (Fruit fly) protein is Eukaryotic translation initiation factor 3 subunit D-1.